A 161-amino-acid polypeptide reads, in one-letter code: Chorion class B protein L12 (161 aa).

An N-terminal signal peptide occupies residues 1-21 (MAAKLILFVCATALVAQSVLS). The left arm stretch occupies residues 22–52 (IGCGCGGRGYGGLGYGGLGYGGLGGGCGRGF). 3 consecutive repeat copies span residues 30 to 34 (GYGGL), 35 to 39 (GYGGL), and 40 to 44 (GYGGL). Positions 30-44 (GYGGLGYGGLGYGGL) are 3 X 5 AA tandem repeats of G-Y-G-G-L. The interval 53 to 121 (SGGGLPVATA…GNGAVGITRE (69 aa)) is central domain. The tract at residues 122-161 (GGFGYGAGYGDGYGLGFGGYGGGYGLGNGGYGGCGCGWGY) is right arm (Gly-rich tandem repeats).

Belongs to the chorion protein family.

This protein is one of many from the eggshell of the silk moth. The sequence is that of Chorion class B protein L12 from Bombyx mori (Silk moth).